Consider the following 297-residue polypeptide: Craniofacial development protein 1 (297 aa).

Acidic residues-rich tracts occupy residues 1-18 and 25-43; these read MEEF…DEDY and YSED…DGEE. Disordered stretches follow at residues 1 to 154 and 190 to 221; these read MEEF…ELEK and FFKQ…RSSG. Over residues 48-65 the composition is skewed to basic residues; that stretch reads TKGKKRKAQSIPARKRKQ. Residues 69–78 are compositionally biased toward acidic residues; sequence LEEEEEDANE. A phosphoserine mark is found at Ser80, Ser83, and Ser84. Residues 93 to 110 show a composition bias toward basic and acidic residues; the sequence is EQEKGIGAEDARKKKEDE. Residue Ser114 is modified to Phosphoserine. Lys148 participates in a covalent cross-link: Glycyl lysine isopeptide (Lys-Gly) (interchain with G-Cter in SUMO2). The segment at 176–215 is hydrophilic; that stretch reads VTKEVDATSKEAKSFFKQNEKEKPQTNVPAALPSLPAGSG. Residues 190-199 show a composition bias toward basic and acidic residues; the sequence is FFKQNEKEKP. At Ser214 the chain carries Phosphoserine. The region spanning 216 to 297 is the BCNT-C domain; that stretch reads LKRSSGMSNL…RDLRLSKMKP (82 aa). Lys217 carries the post-translational modification N6-methyllysine. Ser248 is subject to Phosphoserine.

It localises to the chromosome. It is found in the centromere. The protein resides in the kinetochore. Its function is as follows. May play a role during embryogenesis. The chain is Craniofacial development protein 1 (CFDP1) from Camelus dromedarius (Dromedary).